The following is a 103-amino-acid chain: Histone H4, major (103 aa).

A compositionally biased stretch (gly residues) spans 1 to 12; that stretch reads MAGGKGGKGMGK. Residues 1–29 form a disordered region; the sequence is MAGGKGGKGMGKVGAKRHSKRSNKASIEG. N6-acetyllysine occurs at positions 5, 8, 12, and 16. The segment covering 14-23 has biased composition (basic residues); the sequence is GAKRHSKRSN. The DNA-binding element occupies 16–21; it reads KRHSKR.

Belongs to the histone H4 family. As to quaternary structure, the nucleosome is a histone octamer containing two molecules each of H2A, H2B, H3 and H4 assembled in one H3-H4 heterotetramer and two H2A-H2B heterodimers. The octamer wraps approximately 147 bp of DNA.

Its subcellular location is the nucleus. It is found in the chromosome. Core component of nucleosome. Nucleosomes wrap and compact DNA into chromatin, limiting DNA accessibility to the cellular machineries which require DNA as a template. Histones thereby play a central role in transcription regulation, DNA repair, DNA replication and chromosomal stability. DNA accessibility is regulated via a complex set of post-translational modifications of histones, also called histone code, and nucleosome remodeling. The sequence is that of Histone H4, major from Tetrahymena pyriformis.